Reading from the N-terminus, the 392-residue chain is Cell division protein FtsZ (392 aa).

GTP is bound by residues 24 to 28, 111 to 113, glutamate 142, arginine 145, and aspartate 189; these read GGGCN and GTG.

Belongs to the FtsZ family. Homodimer. Polymerizes to form a dynamic ring structure in a strictly GTP-dependent manner. Interacts directly with several other division proteins.

The protein localises to the cytoplasm. Functionally, essential cell division protein that forms a contractile ring structure (Z ring) at the future cell division site. The regulation of the ring assembly controls the timing and the location of cell division. One of the functions of the FtsZ ring is to recruit other cell division proteins to the septum to produce a new cell wall between the dividing cells. Binds GTP and shows GTPase activity. The polypeptide is Cell division protein FtsZ (Neisseria meningitidis serogroup A / serotype 4A (strain DSM 15465 / Z2491)).